A 93-amino-acid polypeptide reads, in one-letter code: Small ribosomal subunit protein uS19 (93 aa).

This sequence belongs to the universal ribosomal protein uS19 family.

Protein S19 forms a complex with S13 that binds strongly to the 16S ribosomal RNA. The polypeptide is Small ribosomal subunit protein uS19 (Nautilia profundicola (strain ATCC BAA-1463 / DSM 18972 / AmH)).